A 732-amino-acid polypeptide reads, in one-letter code: MAFLSSTLHSLGIFEKISRIKEVLKNRLLDLTKRRDQAREQQRKRPHTIIQGLLLWSLPVSWIRFLWRQPGEFPVTAFLLGAGTGGLLAIGLFQLLVNPMNIYEEQKVVALYCLASLGAIGWGTSPHIRCASLLLVPKMLGKEGRLFVMGYALAAIYSGPAANLRSNINEVIASLGCTVELQINNTRSAWRVSTAPLRAVFKGMVGSKDSLNKEIQNVSTSFEEMDEQVKSDAGYSSEDWDKNRESTEMFGTSRVRPYLSTQMVYELRTRLRCIHVVNKAILSCYRWFDKKHKNCMRRIHLPLFNNMICVPMKFKFLCNIAKVIEIWCYKRIPVEGNFGQTYDSVNQSIHGLSGEFSANINLKEEKQSSMVGLNTTNWEHMGTEVRDYVRQQETYLQWAMGLLHVLLSCTFLLVFHSAFSYMDHYNWDIRFDNIYISTYFCQIDARRKKLGKQSLLPLRKAERKTVIFPFKATIQAWEMRYVIRELLETLPIVLLLLVLCAIDWALYSVFDTIRQHSFVQYSFRSSHKLEIKVEGDSILAKLLRKTIGALNTSSSTDVETNNMPCLPQPISLNARDYFKASLPTLLLVCLCLAQAFGYRLRRVIAAFYFPKREKKRALFFYNEFLKKRSAFTKLRRAAIVRRANQQKAPPHYLVEALYRRCPLLHRFMRQRCVVCQAMETPDSYVCPTPDCKALYCRSCWDDMQRLCPVCTPREELSSSAHSDSNDDAVYGD.

The Cytoplasmic portion of the chain corresponds to 1–46 (MAFLSSTLHSLGIFEKISRIKEVLKNRLLDLTKRRDQAREQQRKRP). Residues 47–67 (HTIIQGLLLWSLPVSWIRFLW) traverse the membrane as a helical segment. Topologically, residues 68-76 (RQPGEFPVT) are extracellular. Residues 77–97 (AFLLGAGTGGLLAIGLFQLLV) form a helical membrane-spanning segment. Over 98 to 107 (NPMNIYEEQK) the chain is Cytoplasmic. A helical transmembrane segment spans residues 108–128 (VVALYCLASLGAIGWGTSPHI). Residues 129 to 394 (RCASLLLVPK…VRDYVRQQET (266 aa)) lie on the Extracellular side of the membrane. Asn-184, Asn-217, Asn-346, and Asn-374 each carry an N-linked (GlcNAc...) asparagine glycan. Residues 395–415 (YLQWAMGLLHVLLSCTFLLVF) form a helical membrane-spanning segment. Over 416-489 (HSAFSYMDHY…RYVIRELLET (74 aa)) the chain is Cytoplasmic. The chain crosses the membrane as a helical span at residues 490-510 (LPIVLLLLVLCAIDWALYSVF). Topologically, residues 511–576 (DTIRQHSFVQ…PQPISLNARD (66 aa)) are extracellular. An N-linked (GlcNAc...) asparagine glycan is attached at Asn-551. The helical transmembrane segment at 577-597 (YFKASLPTLLLVCLCLAQAFG) threads the bilayer. Residues 598-732 (YRLRRVIAAF…DSNDDAVYGD (135 aa)) are Cytoplasmic-facing. The segment at 672–711 (CVVCQAMETPDSYVCPTPDCKALYCRSCWDDMQRLCPVCT) adopts an RING-type; degenerate zinc-finger fold.

As to quaternary structure, interacts with STAT2; the interaction results in STAT2 'Lys-48'-linked ubiquitination leading to its proteasomal degradation. Interacts with DCST2. As to expression, expressed in testis.

The protein localises to the cell membrane. Its subcellular location is the cytoplasmic vesicle. It localises to the secretory vesicle. The protein resides in the acrosome membrane. The enzyme catalyses S-ubiquitinyl-[E2 ubiquitin-conjugating enzyme]-L-cysteine + [acceptor protein]-L-lysine = [E2 ubiquitin-conjugating enzyme]-L-cysteine + N(6)-ubiquitinyl-[acceptor protein]-L-lysine.. It functions in the pathway protein modification; protein ubiquitination. Its function is as follows. E3 ubiquitin-protein ligase which mediates 'Lys-48'-linked ubiquitination of STAT2 and induces its proteasomal degradation thereby negatively regulating type-I-interferon signaling. In terms of biological role, essential sperm cell-surface protein required for sperm-egg fusion and fertilization. This Mus musculus (Mouse) protein is E3 ubiquitin-protein ligase DCST1 (Dcst1).